Consider the following 433-residue polypeptide: 23S rRNA (uracil(1939)-C(5))-methyltransferase RlmD (433 aa).

The 59-residue stretch at 10 to 68 folds into the TRAM domain; it reads RTTTRQIITVSVNDLDSFGQGVARHNGKTLFIPGLLPQENAEVTVTEDKKQYARAKVVR. [4Fe-4S] cluster contacts are provided by Cys-81, Cys-87, Cys-90, and Cys-162. S-adenosyl-L-methionine contacts are provided by Gln-265, Phe-294, Asn-299, Glu-315, Asn-342, and Asp-363. Cys-389 serves as the catalytic Nucleophile.

It belongs to the class I-like SAM-binding methyltransferase superfamily. RNA M5U methyltransferase family. RlmD subfamily.

It catalyses the reaction uridine(1939) in 23S rRNA + S-adenosyl-L-methionine = 5-methyluridine(1939) in 23S rRNA + S-adenosyl-L-homocysteine + H(+). Functionally, catalyzes the formation of 5-methyl-uridine at position 1939 (m5U1939) in 23S rRNA. The protein is 23S rRNA (uracil(1939)-C(5))-methyltransferase RlmD of Escherichia coli (strain UTI89 / UPEC).